The following is a 587-amino-acid chain: Cyclic di-GMP phosphodiesterase PA2567 (587 aa).

A GAF domain is found at 28 to 157 (DEVFEEILAA…LEHFARLVMA (130 aa)). The GGDEF domain occupies 192-327 (GALTVIAADL…GVGWARYNPP (136 aa)). The EAL domain occupies 335 to 587 (AFTLLTSLSQ…PEQLEDWLRR (253 aa)).

The enzyme catalyses 3',3'-c-di-GMP + H2O = 5'-phosphoguanylyl(3'-&gt;5')guanosine + H(+). Its function is as follows. Phosphodiesterase (PDE) that catalyzes the hydrolysis of cyclic diguanylate (c-di-GMP) to 5'-pGpG. The protein is Cyclic di-GMP phosphodiesterase PA2567 of Pseudomonas aeruginosa (strain ATCC 15692 / DSM 22644 / CIP 104116 / JCM 14847 / LMG 12228 / 1C / PRS 101 / PAO1).